The following is a 152-amino-acid chain: Anti-CBASS protein Acb1 (152 aa).

Tyr-12 is a 3',3'-cGAMP binding site. Tyr-12 serves as a coordination point for 3',3'-cUAMP. Residues His-44, Thr-46, His-113, and Thr-115 contribute to the active site. Glu-141 and Trp-147 together coordinate 3',3'-cGAMP. 3',3'-cUAMP-binding residues include Glu-141 and Trp-147.

The protein belongs to the anti-CBASS protein Acb1 family.

The enzyme catalyses 3',3'-cUAMP + H2O = U[3'-5']pAp[3'] + H(+). It carries out the reaction 3',3',3'-c-tri-AMP + H2O = A[3'-5']pA[3'-5']pAp[3'] + H(+). It catalyses the reaction 3',3',3'-cAAG + H2O = G[3'-5']pA[3'-5']pAp[3'] + H(+). The catalysed reaction is 3',3',3'-cAAG + H2O = A[3'-5']pG[3'-5']pAp[3'] + H(+). The enzyme catalyses 3',3'-cGAMP + H2O = G[3'-5']pAp[3'] + H(+). Counteracts the host CBASS antiviral defense system. Phosphodiesterase that enables metal-independent hydrolysis of the host cyclic di- and trinucleotide CBASS signals such as 3'3'-cGAMP, 3'3'cUA, and 3'3'3'-cAAA. Does not cleave cGG or cA4. Besides evasion of the CBASS system, might also enable evasion of the type III CRISPR systems that use cA3 signals. The polypeptide is Anti-CBASS protein Acb1 (Salmonella phage S16 (Salmonella phage vB_SenM-S16)).